Consider the following 430-residue polypeptide: MANVVVVGAQWGDEGKGKIVDWLAEQADVVVRFQGGHNAGHTLVIDGTTYKLSLLPSGVVRGGTLSVIGNGVVVDPWHLVDEIARLGQQGVTITPETLRIADNATLILPLHRELDHFRETANATLRIGTTKRGIGPAYEDKVGRRAIRVVDLADADLLGAKIERLLAHHNALRRGLGIEEVDGAALKTELLAIAPRILPFADTVWALLDEARRAGRRILFEGAQGALLDVDHGTYPYVTSSNIVAAQAATGSGLGPSAIGYVLGIVKAYTTRVGEGPFPTELTDAIGEKIGERGREFGVVTGRKRRCGWFDAALVRQTVRTSGIDGIALTKLDILDGFETIKICTGYRLDGRIIDHLPASQADQARVEPVYETIDGWFETTAGARSWAELPAQAIKYVRRIEELIGATVALLSTSPERDDTILVHNPFED.

GTP-binding positions include 12-18 (GDEGKGK) and 40-42 (GHT). The Proton acceptor role is filled by D13. D13 and G40 together coordinate Mg(2+). IMP contacts are provided by residues 13-16 (DEGK), 38-41 (NAGH), T130, R144, Q224, T239, and R303. H41 serves as the catalytic Proton donor. 299-305 (VVTGRKR) serves as a coordination point for substrate. GTP-binding positions include R305, 331–333 (KLD), and 413–415 (STS).

It belongs to the adenylosuccinate synthetase family. As to quaternary structure, homodimer. Mg(2+) serves as cofactor.

Its subcellular location is the cytoplasm. The catalysed reaction is IMP + L-aspartate + GTP = N(6)-(1,2-dicarboxyethyl)-AMP + GDP + phosphate + 2 H(+). The protein operates within purine metabolism; AMP biosynthesis via de novo pathway; AMP from IMP: step 1/2. In terms of biological role, plays an important role in the de novo pathway of purine nucleotide biosynthesis. Catalyzes the first committed step in the biosynthesis of AMP from IMP. The sequence is that of Adenylosuccinate synthetase from Methylobacterium nodulans (strain LMG 21967 / CNCM I-2342 / ORS 2060).